The following is a 199-amino-acid chain: Cilia- and flagella-associated protein 20 (199 aa).

It belongs to the CFAP20 family. As to expression, expressed in spermatocytes and chordotonal organs in sensory neurons of the antenna.

It localises to the nucleus. The protein resides in the nucleolus. It is found in the cell projection. Its subcellular location is the cilium. The protein localises to the cytoplasm. It localises to the cytoskeleton. The protein resides in the microtubule organizing center. It is found in the centrosome. Its subcellular location is the centriole. The protein localises to the flagellum. It localises to the cilium axoneme. In terms of biological role, cilium- and flagellum-specific protein that plays a role in axonemal structure organization and motility. Microtubule inner protein (MIP) part of the dynein-decorated doublet microtubules (DMTs) in cilia axoneme, which is required for motile cilia beating. Involved in the regulation of the size and morphology of cilia. Required for sperm individualization, differentiation of the sperm flagellum and tubulin polyglycylation of axonemal microtubules. The sequence is that of Cilia- and flagella-associated protein 20 from Drosophila melanogaster (Fruit fly).